An 86-amino-acid chain; its full sequence is Large ribosomal subunit protein bL27 (86 aa).

The segment at 1–22 (MATKKAGGSSRNGRDSAGRRLG) is disordered.

It belongs to the bacterial ribosomal protein bL27 family.

This is Large ribosomal subunit protein bL27 from Rickettsia rickettsii (strain Iowa).